The following is a 367-amino-acid chain: Metacaspase-1 (367 aa).

The interval 47 to 77 is disordered; sequence DPRTAPPPQPSSAPSPPPQIHAPPGQLPHPH. Positions 50–73 are enriched in pro residues; the sequence is TAPPPQPSSAPSPPPQIHAPPGQL. Catalysis depends on residues histidine 164 and cysteine 220.

Belongs to the peptidase C14B family. In terms of assembly, interacts (via N-terminus) with LSD1. In terms of processing, proteolytically processed; by an autocatalytic mechanism.

Cysteine protease that cleaves specifically after arginine or lysine residues. Does not cleave caspase-specific substrates. Acts as a positive regulator of cell death. Required for both oxidative stress cell death response and hypersensitive cell death response mediated by immune response. The sequence is that of Metacaspase-1 (AMC1) from Arabidopsis thaliana (Mouse-ear cress).